The primary structure comprises 332 residues: 2,3-diketo-L-gulonate reductase (332 aa).

H44 serves as the catalytic Proton donor. NAD(+) is bound by residues 168 to 174 (ITMVDMS), 224 to 225 (WK), and 304 to 306 (GHE).

It belongs to the LDH2/MDH2 oxidoreductase family. DlgD subfamily. Homodimer.

It is found in the cytoplasm. The catalysed reaction is 3-dehydro-L-gulonate + NAD(+) = 2,3-dioxo-L-gulonate + NADH + H(+). It catalyses the reaction 3-dehydro-L-gulonate + NADP(+) = 2,3-dioxo-L-gulonate + NADPH + H(+). Catalyzes the reduction of 2,3-diketo-L-gulonate in the presence of NADH, to form 3-keto-L-gulonate. This Mannheimia succiniciproducens (strain KCTC 0769BP / MBEL55E) protein is 2,3-diketo-L-gulonate reductase.